A 61-amino-acid polypeptide reads, in one-letter code: Small ribosomal subunit protein uS14 (61 aa).

Zn(2+) contacts are provided by cysteine 24, cysteine 27, cysteine 40, and cysteine 43.

This sequence belongs to the universal ribosomal protein uS14 family. Zinc-binding uS14 subfamily. As to quaternary structure, part of the 30S ribosomal subunit. Contacts proteins S3 and S10. Zn(2+) serves as cofactor.

In terms of biological role, binds 16S rRNA, required for the assembly of 30S particles and may also be responsible for determining the conformation of the 16S rRNA at the A site. The polypeptide is Small ribosomal subunit protein uS14 (Bifidobacterium adolescentis (strain ATCC 15703 / DSM 20083 / NCTC 11814 / E194a)).